We begin with the raw amino-acid sequence, 247 residues long: (7aS)-7a-methyl-1,5-dioxo-2,3,5,6,7,7a-hexahydro-1H-indene-carboxyl-CoA hydrolase (247 aa).

It belongs to the enoyl-CoA hydratase/isomerase family.

It carries out the reaction (7aS)-7a-methyl-1,5-dioxo-2,3,5,6,7,7a-hexahydro-1H-indene-carboxyl-CoA + H2O = (3E)-2-(2-carboxylatoethyl)-3-methyl-6-oxocyclohex-1-ene-1-carboxyl-CoA + H(+). Its pathway is steroid metabolism; cholesterol degradation. Functionally, involved in the final steps of cholesterol and steroid degradation. Catalyzes the hydrolytic ring D opening of (7aS)-7a-methyl-1,5-dioxo-2,3,5,6,7,7a-hexahydro-1H-indene-carboxyl-CoA (HIEC-CoA) to (3E)-2-(2-carboxylatoethyl)-3-methyl-6-oxocyclohex-1-ene-1-carboxyl-CoA (COCHEA-CoA). The chain is (7aS)-7a-methyl-1,5-dioxo-2,3,5,6,7,7a-hexahydro-1H-indene-carboxyl-CoA hydrolase from Mycobacterium tuberculosis (strain ATCC 25618 / H37Rv).